The primary structure comprises 62 residues: MARECYITGRKARSGNKRSHAMNKSKRRFGANVQKVRILVDGKPKRVYVSARALKSGKVERV.

Positions 1–27 (MARECYITGRKARSGNKRSHAMNKSKR) are disordered. A compositionally biased stretch (basic residues) spans 10–27 (RKARSGNKRSHAMNKSKR).

This sequence belongs to the bacterial ribosomal protein bL28 family.

This is Large ribosomal subunit protein bL28 from Shouchella clausii (strain KSM-K16) (Alkalihalobacillus clausii).